We begin with the raw amino-acid sequence, 681 residues long: Minichromosome maintenance domain-containing protein 2 (681 aa).

The residue at position 292 (serine 292) is a Phosphoserine. In terms of domain architecture, MCM spans 533-621; sequence KQFTTEDFEK…LIAALLFEIS (89 aa).

Functionally, plays an important role in meiotic recombination and associated DNA double-strand break repair. This is Minichromosome maintenance domain-containing protein 2 (Mcmdc2) from Rattus norvegicus (Rat).